The chain runs to 184 residues: Large ribosomal subunit protein uL6 (184 aa).

The protein belongs to the universal ribosomal protein uL6 family. Part of the 50S ribosomal subunit.

Its function is as follows. This protein binds to the 23S rRNA, and is important in its secondary structure. It is located near the subunit interface in the base of the L7/L12 stalk, and near the tRNA binding site of the peptidyltransferase center. In Cytophaga hutchinsonii (strain ATCC 33406 / DSM 1761 / CIP 103989 / NBRC 15051 / NCIMB 9469 / D465), this protein is Large ribosomal subunit protein uL6.